Reading from the N-terminus, the 568-residue chain is Small ribosomal subunit protein bS1 (568 aa).

S1 motif domains lie at Gly-27 to Glu-93, Gly-111 to Arg-177, Gly-198 to Lys-266, Gly-283 to Lys-353, Gly-370 to Lys-440, and Asn-459 to Lys-530.

Belongs to the bacterial ribosomal protein bS1 family.

Binds mRNA; thus facilitating recognition of the initiation point. It is needed to translate mRNA with a short Shine-Dalgarno (SD) purine-rich sequence. This chain is Small ribosomal subunit protein bS1 (rpsA), found in Rhizobium meliloti (strain 1021) (Ensifer meliloti).